Consider the following 925-residue polypeptide: Isoleucine--tRNA ligase (925 aa).

Positions 57–67 (PYANGDIHIGH) match the 'HIGH' region motif. Glu-553 contacts L-isoleucyl-5'-AMP. A 'KMSKS' region motif is present at residues 594–598 (KMSKS). Lys-597 is an ATP binding site. Positions 889, 892, 909, and 912 each coordinate Zn(2+).

It belongs to the class-I aminoacyl-tRNA synthetase family. IleS type 1 subfamily. Monomer. The cofactor is Zn(2+).

The protein resides in the cytoplasm. The catalysed reaction is tRNA(Ile) + L-isoleucine + ATP = L-isoleucyl-tRNA(Ile) + AMP + diphosphate. Catalyzes the attachment of isoleucine to tRNA(Ile). As IleRS can inadvertently accommodate and process structurally similar amino acids such as valine, to avoid such errors it has two additional distinct tRNA(Ile)-dependent editing activities. One activity is designated as 'pretransfer' editing and involves the hydrolysis of activated Val-AMP. The other activity is designated 'posttransfer' editing and involves deacylation of mischarged Val-tRNA(Ile). The sequence is that of Isoleucine--tRNA ligase from Brevibacillus brevis (strain 47 / JCM 6285 / NBRC 100599).